The chain runs to 210 residues: Molybdenum cofactor guanylyltransferase (210 aa).

GTP contacts are provided by residues 9 to 11 (LAG), Lys-21, Asp-66, and Asp-95. Mg(2+) is bound at residue Asp-95.

It belongs to the MobA family. Monomer. The cofactor is Mg(2+).

Its subcellular location is the cytoplasm. It catalyses the reaction Mo-molybdopterin + GTP + H(+) = Mo-molybdopterin guanine dinucleotide + diphosphate. In terms of biological role, transfers a GMP moiety from GTP to Mo-molybdopterin (Mo-MPT) cofactor (Moco or molybdenum cofactor) to form Mo-molybdopterin guanine dinucleotide (Mo-MGD) cofactor. This is Molybdenum cofactor guanylyltransferase from Syntrophotalea carbinolica (strain DSM 2380 / NBRC 103641 / GraBd1) (Pelobacter carbinolicus).